The chain runs to 754 residues: Phosphoribosylformylglycinamidine synthase subunit PurL (754 aa).

The active site involves His-54. ATP contacts are provided by Tyr-57 and Lys-101. Glu-103 provides a ligand contact to Mg(2+). Residues 104-107 and Arg-126 each bind substrate; that span reads SHNH. His-105 serves as the catalytic Proton acceptor. Asp-127 serves as a coordination point for Mg(2+). Residue Gln-252 participates in substrate binding. Asp-280 serves as a coordination point for Mg(2+). 324–326 serves as a coordination point for substrate; the sequence is ESQ. The segment at 386–412 is disordered; it reads PVYQRPVSRPESQEALNADSSKGLPRP. 2 residues coordinate ATP: Asn-512 and Gly-549. Asn-550 contacts Mg(2+). Ser-552 is a substrate binding site.

Belongs to the FGAMS family. As to quaternary structure, monomer. Part of the FGAM synthase complex composed of 1 PurL, 1 PurQ and 2 PurS subunits.

Its subcellular location is the cytoplasm. The enzyme catalyses N(2)-formyl-N(1)-(5-phospho-beta-D-ribosyl)glycinamide + L-glutamine + ATP + H2O = 2-formamido-N(1)-(5-O-phospho-beta-D-ribosyl)acetamidine + L-glutamate + ADP + phosphate + H(+). The protein operates within purine metabolism; IMP biosynthesis via de novo pathway; 5-amino-1-(5-phospho-D-ribosyl)imidazole from N(2)-formyl-N(1)-(5-phospho-D-ribosyl)glycinamide: step 1/2. In terms of biological role, part of the phosphoribosylformylglycinamidine synthase complex involved in the purines biosynthetic pathway. Catalyzes the ATP-dependent conversion of formylglycinamide ribonucleotide (FGAR) and glutamine to yield formylglycinamidine ribonucleotide (FGAM) and glutamate. The FGAM synthase complex is composed of three subunits. PurQ produces an ammonia molecule by converting glutamine to glutamate. PurL transfers the ammonia molecule to FGAR to form FGAM in an ATP-dependent manner. PurS interacts with PurQ and PurL and is thought to assist in the transfer of the ammonia molecule from PurQ to PurL. This Mycobacterium leprae (strain Br4923) protein is Phosphoribosylformylglycinamidine synthase subunit PurL.